The sequence spans 160 residues: Cyanate hydratase (160 aa).

Catalysis depends on residues arginine 100, glutamate 103, and serine 126.

The protein belongs to the cyanase family.

It carries out the reaction cyanate + hydrogencarbonate + 3 H(+) = NH4(+) + 2 CO2. In terms of biological role, catalyzes the reaction of cyanate with bicarbonate to produce ammonia and carbon dioxide. The chain is Cyanate hydratase from Arthroderma otae (strain ATCC MYA-4605 / CBS 113480) (Microsporum canis).